A 119-amino-acid polypeptide reads, in one-letter code: Circadian clock oscillator protein KaiB (119 aa).

This sequence belongs to the KaiB family. In terms of assembly, may undergo a major conformational rearrangment; in the free state forms homooligomers. When bound to KaiC switches to a monomeric thioredoxin-fold (KaiB(fs)). The active oscillator complex is probably KaiC(6):KaiB(6).

Functionally, component of the KaiBC clock protein complex, which constitutes the main circadian regulator in cyanobacteria; it may modify the ATPase activity of KaiC. Its function is as follows. May be a metamorphic protein which reversibly switches between an inactive tetrameric fold and a rare, thioredoxin-like monomeric fold (KaiB(fs)). KaiB(fs) binds phospho-KaiC, and perhaps clock output effectors. This Prochlorococcus marinus (strain MIT 9313) protein is Circadian clock oscillator protein KaiB.